The following is a 400-amino-acid chain: tRNA(Ile)-lysidine synthase (400 aa).

25–30 contributes to the ATP binding site; that stretch reads SGGVDS.

It belongs to the tRNA(Ile)-lysidine synthase family.

It localises to the cytoplasm. The enzyme catalyses cytidine(34) in tRNA(Ile2) + L-lysine + ATP = lysidine(34) in tRNA(Ile2) + AMP + diphosphate + H(+). In terms of biological role, ligates lysine onto the cytidine present at position 34 of the AUA codon-specific tRNA(Ile) that contains the anticodon CAU, in an ATP-dependent manner. Cytidine is converted to lysidine, thus changing the amino acid specificity of the tRNA from methionine to isoleucine. This Francisella philomiragia subsp. philomiragia (strain ATCC 25017 / CCUG 19701 / FSC 153 / O#319-036) protein is tRNA(Ile)-lysidine synthase.